The following is a 336-amino-acid chain: MVGVQICQGMTSEILFFSLQPQFSNMMNKNSRLHIDSNIRNTFFTEIGIGVSANSLLLLFNIFKFIHGQRSRLTDLPIGLLSLINLLMLLIMACIATDIFISCRRWDDIICKSLLYLYRTFRGLSLSTTCLLSVLQAIILSPRSSCLAKYKHKPPHHIFCAMLFLSVLYMFISSHLLLSIIATPNLTTNDFIHVSQSCSILPMSYLMQSMFSTLLAIRNVFLISLIVLSTWYMVALLCRHRKQTRHLQDTSLSRKASPEQRATRSILMLRSLFVLMSIFDSIVSCSRTMYLNDPTSYSIQLLVVHIYATVSPFVFMITEKHIVNYLKSMYVRVLNV.

Residues 1–42 (MVGVQICQGMTSEILFFSLQPQFSNMMNKNSRLHIDSNIRNT) are Extracellular-facing. The chain crosses the membrane as a helical span at residues 43 to 63 (FFTEIGIGVSANSLLLLFNIF). Residues 64–75 (KFIHGQRSRLTD) lie on the Cytoplasmic side of the membrane. Residues 76–96 (LPIGLLSLINLLMLLIMACIA) form a helical membrane-spanning segment. At 97–120 (TDIFISCRRWDDIICKSLLYLYRT) the chain is on the extracellular side. Cysteines 111 and 198 form a disulfide. A helical transmembrane segment spans residues 121-140 (FRGLSLSTTCLLSVLQAIIL). Topologically, residues 141–157 (SPRSSCLAKYKHKPPHH) are cytoplasmic. Residues 158–178 (IFCAMLFLSVLYMFISSHLLL) form a helical membrane-spanning segment. Residues 179–213 (SIIATPNLTTNDFIHVSQSCSILPMSYLMQSMFST) are Extracellular-facing. The N-linked (GlcNAc...) asparagine glycan is linked to Asn185. Residues 214 to 234 (LLAIRNVFLISLIVLSTWYMV) traverse the membrane as a helical segment. The Cytoplasmic segment spans residues 235-264 (ALLCRHRKQTRHLQDTSLSRKASPEQRATR). The helical transmembrane segment at 265–285 (SILMLRSLFVLMSIFDSIVSC) threads the bilayer. The Extracellular portion of the chain corresponds to 286-296 (SRTMYLNDPTS). Residues 297–317 (YSIQLLVVHIYATVSPFVFMI) traverse the membrane as a helical segment. At 318–336 (TEKHIVNYLKSMYVRVLNV) the chain is on the cytoplasmic side.

The protein belongs to the G-protein coupled receptor 1 family. In terms of tissue distribution, expressed in 1-4% of neurons of the vomeronasal organ. Only one pheromone receptor gene may be expressed in a particular neuron. Not expressed in the main olfactory epithelium.

The protein resides in the cell membrane. Putative pheromone receptor implicated in the regulation of social as well as reproductive behavior. This chain is Vomeronasal type-1 receptor 102 (Vom1r102), found in Rattus norvegicus (Rat).